We begin with the raw amino-acid sequence, 141 residues long: MAKEVSAIVRLQIPAGQANPAPPVGPALGQHGVNIMAFCKEFNAATQKEAGNILPVVITIYKDKTFTFVTKSPPASILLKKAANIASGSKEPNRTKVGKVTKAQVKEIVKIKWKDLNASTEEAAMRMIEGTARNMGIEVVE.

This sequence belongs to the universal ribosomal protein uL11 family. Part of the ribosomal stalk of the 50S ribosomal subunit. Interacts with L10 and the large rRNA to form the base of the stalk. L10 forms an elongated spine to which L12 dimers bind in a sequential fashion forming a multimeric L10(L12)X complex. Post-translationally, one or more lysine residues are methylated.

Forms part of the ribosomal stalk which helps the ribosome interact with GTP-bound translation factors. The protein is Large ribosomal subunit protein uL11 of Methylacidiphilum infernorum (isolate V4) (Methylokorus infernorum (strain V4)).